The primary structure comprises 252 residues: Small ribosomal subunit protein uS3 (252 aa).

The KH type-2 domain maps to 39-110 (IRKALMKELK…EVKINVVEIK (72 aa)). Residues 218 to 252 (TSDEKPKFEKRDFNRSNNNRRDQAPKSHPVAKEAK) are disordered. A compositionally biased stretch (basic and acidic residues) spans 219–252 (SDEKPKFEKRDFNRSNNNRRDQAPKSHPVAKEAK).

Belongs to the universal ribosomal protein uS3 family. As to quaternary structure, part of the 30S ribosomal subunit. Forms a tight complex with proteins S10 and S14.

Its function is as follows. Binds the lower part of the 30S subunit head. Binds mRNA in the 70S ribosome, positioning it for translation. This is Small ribosomal subunit protein uS3 from Spiroplasma citri.